Consider the following 570-residue polypeptide: Molecular chaperone MKKS (570 aa).

Position 192-199 (192-199 (GHIILGKS)) interacts with ATP. The substrate-binding apical domain stretch occupies residues 198–370 (KSLIVPLKGQ…FHLIPNEATI (173 aa)).

Belongs to the TCP-1 chaperonin family. As to quaternary structure, component of a complex composed at least of MKKS, BBS10, BBS12, TCP1, CCT2, CCT3, CCT4, CCT5 and CCT8. Interacts with STUB1. Interacts with BBS2 (via coiled coil domain). Interacts with CCDC28B. Interacts with BBS12. Interacts with SMARCC1, a component of the SWI/SNF complexes; the interaction takes place predominantly in the cytoplasm and may modulate SMARCC1 location. Interacts with DLEC1.

Its subcellular location is the cytoplasm. The protein resides in the cytoskeleton. The protein localises to the microtubule organizing center. It localises to the centrosome. It is found in the cytosol. Its subcellular location is the nucleus. Its function is as follows. Probable molecular chaperone that assists the folding of proteins upon ATP hydrolysis. Plays a role in the assembly of BBSome, a complex involved in ciliogenesis regulating transports vesicles to the cilia. May play a role in protein processing in limb, cardiac and reproductive system development. May play a role in cytokinesis. The protein is Molecular chaperone MKKS (MKKS) of Pongo abelii (Sumatran orangutan).